Consider the following 172-residue polypeptide: Co-chaperone protein HscB homolog (172 aa).

Residues 2 to 74 form the J domain; it reads NHFELFGLVE…LRRAEYLLSL (73 aa).

Belongs to the HscB family. Interacts with HscA and stimulates its ATPase activity.

Functionally, co-chaperone involved in the maturation of iron-sulfur cluster-containing proteins. Seems to help targeting proteins to be folded toward HscA. In Aeromonas salmonicida (strain A449), this protein is Co-chaperone protein HscB homolog.